The sequence spans 491 residues: Ubiquitin carboxyl-terminal hydrolase 30 (491 aa).

Residues 1 to 31 (MPWCKQGTTDKLVREFLRTGAAARNKMMKNW) are Mitochondrial intermembrane-facing. The chain crosses the membrane as a helical span at residues 32–52 (GVIGGIAAAMAAGVYVLWGPI). Over 53–491 (SDRRKKRKGM…MQRPGLRVEE (439 aa)) the chain is Cytoplasmic. Residues 64 to 482 (PGLLNLGNTC…SAYLLFYERM (419 aa)) form the USP domain. Catalysis depends on cysteine 73, which acts as the Nucleophile. Residues 346–355 (AQSQQKTSRT) show a composition bias toward polar residues. Residues 346–365 (AQSQQKTSRTNKAKASADPK) are disordered. Histidine 432 acts as the Proton acceptor in catalysis.

Belongs to the peptidase C19 family.

Its subcellular location is the mitochondrion outer membrane. The catalysed reaction is Thiol-dependent hydrolysis of ester, thioester, amide, peptide and isopeptide bonds formed by the C-terminal Gly of ubiquitin (a 76-residue protein attached to proteins as an intracellular targeting signal).. Its function is as follows. Deubiquitinating enzyme that acts as a key inhibitor of mitophagy by counteracting the action of parkin (PRKN). This chain is Ubiquitin carboxyl-terminal hydrolase 30 (usp30), found in Danio rerio (Zebrafish).